The following is a 499-amino-acid chain: BTB/POZ domain-containing protein 16 (499 aa).

Residues 143–199 (INDPLVTREAFATALKNLYMQEVKICLDDVLGVLAAAHILQFGSLFQRCVTVMMSGL) enclose the BTB domain.

The chain is BTB/POZ domain-containing protein 16 (BTBD16) from Bos taurus (Bovine).